Consider the following 250-residue polypeptide: 2,5-dichloro-2,5-cyclohexadiene-1,4-diol dehydrogenase (250 aa).

9-34 (IIVTGGGSGIGRATVELLVASGANVA) serves as a coordination point for NAD(+). Ser-141 is a binding site for substrate. Tyr-154 (proton acceptor) is an active-site residue.

Belongs to the short-chain dehydrogenases/reductases (SDR) family.

It catalyses the reaction 2,5-dichlorocyclohexa-2,5-dien-1,4-diol + NAD(+) = 2,5-dichlorohydroquinone + NADH + H(+). It functions in the pathway xenobiotic degradation; gamma-hexachlorocyclohexane degradation. In terms of biological role, catalyzes the dehydrogenation of 2,5-dichloro-2,5-cyclohexadiene-1,4-diol (2,5-DDOL) to 2,5-dichlorohydroquinone (2,5-DCHQ), a step in the degradation of gamma-hexachlorocyclohexane (gamma-HCH or lindane). Has an essential role in this assimilation pathway that allows S.japonicum UT26 to grow on gamma-HCH as the sole source of carbon and energy. This Sphingobium indicum (strain DSM 16413 / CCM 7287 / MTCC 6362 / UT26 / NBRC 101211 / UT26S) (Sphingobium japonicum) protein is 2,5-dichloro-2,5-cyclohexadiene-1,4-diol dehydrogenase.